The sequence spans 494 residues: Calmodulin-binding protein 60 A (494 aa).

The tract at residues 1–62 is calmodulin-binding; the sequence is MRIPTYDFGS…AGIKWICEKE (62 aa). The tract at residues 132-252 is DNA-binding; the sequence is VSDWTDEDIR…AFHRRLNLSN (121 aa).

Belongs to the plant ACBP60 protein family. In terms of assembly, interacts with calmodulin (CaM). As to expression, expressed in stems, flowers and root.

The protein resides in the nucleus. In terms of biological role, transcription activator that binds DNA in a sequence-specific manner, likely 5'-GAAATTTTGG-3', to promote the expression of target genes. This Arabidopsis thaliana (Mouse-ear cress) protein is Calmodulin-binding protein 60 A.